Here is a 548-residue protein sequence, read N- to C-terminus: Leucine-rich repeat LGI family member 3 (548 aa).

The signal sequence occupies residues 1–30 (MAGLRARRGPGRRLLVLSTLGFCLMLQVSA). In terms of domain architecture, LRRNT spans 31–64 (KRPPKTPPCPPSCSCTRDTAFCVDSKSVPKNLPS). 3 LRR repeats span residues 89–110 (LLQF…AFIG), 113–134 (HLQY…TFRG), and 137–158 (SLTH…IFRP). The 51-residue stretch at 170–220 (NALNCDCKVKWLVEWLAHTNTTVAPIYCASPPRFQEHKVQDLPLREFDCIT) folds into the LRRCT domain. An N-linked (GlcNAc...) asparagine glycan is attached at asparagine 189. 2 EAR repeats span residues 222 to 264 (DFVL…KWDY) and 268 to 310 (QLRD…HWDP). Asparagine 311 is a glycosylation site (N-linked (GlcNAc...) asparagine). EAR repeat units lie at residues 314 to 361 (RFTK…RWHQ), 363 to 406 (GFYS…QWSR), 410 to 453 (QFVA…RWEG), 455 to 497 (RFSE…QWDE), and 501 to 543 (KFVR…RHVV).

Interacts with STX1A. Brain.

It is found in the secreted. The protein resides in the cytoplasmic vesicle. The protein localises to the secretory vesicle. Its subcellular location is the synaptic vesicle. It localises to the synapse. It is found in the synaptosome. The protein resides in the cell projection. The protein localises to the axon. In terms of biological role, may participate in the regulation of neuronal exocytosis. The polypeptide is Leucine-rich repeat LGI family member 3 (Lgi3) (Mus musculus (Mouse)).